We begin with the raw amino-acid sequence, 165 residues long: Yapsin-5 (165 aa).

An N-terminal signal peptide occupies residues 1–24 (MQLFSILSLLSSLMCSLTVLGSSA). N-linked (GlcNAc...) asparagine glycosylation occurs at N57. The 99-residue stretch at 67–165 (YVVKMEIGTP…TRLSSMTYTY (99 aa)) folds into the Peptidase A1 domain.

It belongs to the peptidase A1 family.

This Saccharomyces cerevisiae (strain ATCC 204508 / S288c) (Baker's yeast) protein is Yapsin-5 (YPS5).